Consider the following 464-residue polypeptide: tRNA modification GTPase MnmE (464 aa).

Residues arginine 25, glutamate 87, and lysine 130 each contribute to the (6S)-5-formyl-5,6,7,8-tetrahydrofolate site. The 161-residue stretch at 226–386 (GLSVVLAGQP…LRAELLRIAG (161 aa)) folds into the TrmE-type G domain. Asparagine 236 contributes to the K(+) binding site. GTP-binding positions include 236 to 241 (NVGKSS), 255 to 261 (TPIAGTT), and 280 to 283 (DTAG). A Mg(2+)-binding site is contributed by serine 240. 3 residues coordinate K(+): threonine 255, isoleucine 257, and threonine 260. Mg(2+) is bound at residue threonine 261. (6S)-5-formyl-5,6,7,8-tetrahydrofolate is bound at residue lysine 464.

It belongs to the TRAFAC class TrmE-Era-EngA-EngB-Septin-like GTPase superfamily. TrmE GTPase family. Homodimer. Heterotetramer of two MnmE and two MnmG subunits. Requires K(+) as cofactor.

It is found in the cytoplasm. Its function is as follows. Exhibits a very high intrinsic GTPase hydrolysis rate. Involved in the addition of a carboxymethylaminomethyl (cmnm) group at the wobble position (U34) of certain tRNAs, forming tRNA-cmnm(5)s(2)U34. The protein is tRNA modification GTPase MnmE of Burkholderia lata (strain ATCC 17760 / DSM 23089 / LMG 22485 / NCIMB 9086 / R18194 / 383).